Consider the following 263-residue polypeptide: uncharacterized protein (263 aa).

The segment at alanine 183 to alanine 263 is disordered. Polar residues-rich tracts occupy residues serine 230–serine 239 and threonine 253–alanine 263.

In terms of biological role, probably does not play a direct role in plasmid integration or excision. This is an uncharacterized protein from Saccharopolyspora erythraea (Streptomyces erythraeus).